The following is a 556-amino-acid chain: Putative D-arabinono-1,4-lactone oxidase (556 aa).

Positions 47–217 constitute an FAD-binding PCMH-type domain; that stretch reads FTSLPELYIQ…TEVTFKAVPA (171 aa). The residue at position 84 (His-84) is a Pros-8alpha-FAD histidine.

This sequence belongs to the oxygen-dependent FAD-linked oxidoreductase family. FAD serves as cofactor.

The protein resides in the mitochondrion membrane. It carries out the reaction D-arabinono-1,4-lactone + O2 = dehydro-D-arabinono-1,4-lactone + H2O2 + H(+). Its pathway is cofactor biosynthesis; D-erythroascorbate biosynthesis; dehydro-D-arabinono-1,4-lactone from D-arabinose: step 2/2. The polypeptide is Putative D-arabinono-1,4-lactone oxidase (alo-1) (Neurospora crassa (strain ATCC 24698 / 74-OR23-1A / CBS 708.71 / DSM 1257 / FGSC 987)).